We begin with the raw amino-acid sequence, 312 residues long: Malate dehydrogenase (312 aa).

Residues 7-13 and Asp-34 contribute to the NAD(+) site; that span reads GAAGGIG. Substrate is bound by residues Arg-81 and Arg-87. NAD(+)-binding positions include Asn-94 and 117-119; that span reads ITN. The substrate site is built by Asn-119 and Arg-153. Residue His-177 is the Proton acceptor of the active site. Met-227 lines the NAD(+) pocket.

Belongs to the LDH/MDH superfamily. MDH type 1 family. As to quaternary structure, homodimer.

The enzyme catalyses (S)-malate + NAD(+) = oxaloacetate + NADH + H(+). Catalyzes the reversible oxidation of malate to oxaloacetate. This Salmonella choleraesuis (strain SC-B67) protein is Malate dehydrogenase.